The primary structure comprises 237 residues: UPF0280 protein Mthe_1297 (237 aa).

The protein belongs to the UPF0280 family.

The sequence is that of UPF0280 protein Mthe_1297 from Methanothrix thermoacetophila (strain DSM 6194 / JCM 14653 / NBRC 101360 / PT) (Methanosaeta thermophila).